A 463-amino-acid chain; its full sequence is Glutamate--tRNA ligase 1 (463 aa).

Residues 10–20 carry the 'HIGH' region motif; that stretch reads PSPTGYLHIGG. A 'KMSKS' region motif is present at residues 238–242; sequence KLSKR. Residue Lys-241 coordinates ATP.

This sequence belongs to the class-I aminoacyl-tRNA synthetase family. Glutamate--tRNA ligase type 1 subfamily. As to quaternary structure, monomer.

The protein resides in the cytoplasm. The catalysed reaction is tRNA(Glu) + L-glutamate + ATP = L-glutamyl-tRNA(Glu) + AMP + diphosphate. Functionally, catalyzes the attachment of glutamate to tRNA(Glu) in a two-step reaction: glutamate is first activated by ATP to form Glu-AMP and then transferred to the acceptor end of tRNA(Glu). The sequence is that of Glutamate--tRNA ligase 1 from Helicobacter pylori (strain J99 / ATCC 700824) (Campylobacter pylori J99).